Here is a 362-residue protein sequence, read N- to C-terminus: Peptide chain release factor 1 (362 aa).

N5-methylglutamine is present on Q235.

Belongs to the prokaryotic/mitochondrial release factor family. Post-translationally, methylated by PrmC. Methylation increases the termination efficiency of RF1.

It localises to the cytoplasm. Functionally, peptide chain release factor 1 directs the termination of translation in response to the peptide chain termination codons UAG and UAA. The polypeptide is Peptide chain release factor 1 (Acinetobacter baumannii (strain ACICU)).